The chain runs to 414 residues: Dimethylsulfoniopropionate lyase DddY (414 aa).

The signal sequence occupies residues 1 to 18 (MKYMVLFSGLLFSNVLVA).

Belongs to the DMSP lyase DddY family.

The protein resides in the periplasm. The catalysed reaction is S,S-dimethyl-beta-propiothetin = acrylate + dimethyl sulfide + H(+). Functionally, catalyzes the cleavage of dimethylsulfoniopropionate (DMSP) into dimethyl sulfide (DMS) and acrylate. The protein is Dimethylsulfoniopropionate lyase DddY of Shewanella woodyi (strain ATCC 51908 / MS32).